A 516-amino-acid polypeptide reads, in one-letter code: Exodeoxyribonuclease 7 large subunit (516 aa).

This sequence belongs to the XseA family. Heterooligomer composed of large and small subunits.

The protein resides in the cytoplasm. The catalysed reaction is Exonucleolytic cleavage in either 5'- to 3'- or 3'- to 5'-direction to yield nucleoside 5'-phosphates.. Its function is as follows. Bidirectionally degrades single-stranded DNA into large acid-insoluble oligonucleotides, which are then degraded further into small acid-soluble oligonucleotides. This Chlamydia trachomatis serovar A (strain ATCC VR-571B / DSM 19440 / HAR-13) protein is Exodeoxyribonuclease 7 large subunit.